Here is a 957-residue protein sequence, read N- to C-terminus: UvrABC system protein A (957 aa).

33–40 lines the ATP pocket; sequence GLSGSGKS. The segment at 252-279 adopts a C4-type zinc-finger fold; that stretch reads CPHCGFSIGELEPRLFSFNSPFGACPTC. 2 ABC transporter domains span residues 309–587 and 607–935; these read WTPI…PNSL and PDGR…RYLK. 639-646 contributes to the ATP binding site; sequence GVSGSGKS. The C4-type zinc-finger motif lies at 738 to 764; the sequence is CEACRGDGIIKIEMHFLPDVYVPCEVC.

This sequence belongs to the ABC transporter superfamily. UvrA family. In terms of assembly, forms a heterotetramer with UvrB during the search for lesions.

The protein resides in the cytoplasm. Functionally, the UvrABC repair system catalyzes the recognition and processing of DNA lesions. UvrA is an ATPase and a DNA-binding protein. A damage recognition complex composed of 2 UvrA and 2 UvrB subunits scans DNA for abnormalities. When the presence of a lesion has been verified by UvrB, the UvrA molecules dissociate. The sequence is that of UvrABC system protein A from Bacillus subtilis (strain 168).